A 145-amino-acid chain; its full sequence is Large ribosomal subunit protein uL16 (145 aa).

Belongs to the universal ribosomal protein uL16 family. As to quaternary structure, part of the 50S ribosomal subunit.

Binds 23S rRNA and is also seen to make contacts with the A and possibly P site tRNAs. This is Large ribosomal subunit protein uL16 from Lachnospira eligens (strain ATCC 27750 / DSM 3376 / VPI C15-48 / C15-B4) (Eubacterium eligens).